Consider the following 288-residue polypeptide: N-acetyltransferase ECO1 (288 aa).

The tract at residues 1–50 (MKRDITQLLSPELSQSSSRNDKKRKPTNSNKKVQTVLNFPSSSPNASQST) is disordered. The span at 7–18 (QLLSPELSQSSS) shows a compositional bias: low complexity. A compositionally biased stretch (polar residues) spans 27–50 (TNSNKKVQTVLNFPSSSPNASQST). A CCHH-type zinc finger spans residues 50 to 74 (TTCPTCGMTYYSHVSKDNDVHNKYH).

This sequence belongs to the acetyltransferase family. ECO subfamily.

The protein localises to the nucleus. Functionally, probable acetyltransferase required for the establishment of sister chromatid cohesion and couple the processes of cohesion and DNA replication to ensure that only sister chromatids become paired together. In contrast to the structural cohesins, the deposition and establishment factors are required only during S phase. Acts by acetylating the cohesin complex component SMC3. This Debaryomyces hansenii (strain ATCC 36239 / CBS 767 / BCRC 21394 / JCM 1990 / NBRC 0083 / IGC 2968) (Yeast) protein is N-acetyltransferase ECO1 (ECO1).